Here is a 226-residue protein sequence, read N- to C-terminus: ATP synthase F(0) complex subunit a (226 aa).

6 consecutive transmembrane segments (helical) span residues 9–29, 68–88, 97–117, 138–158, 164–184, and 201–223; these read FITPTMMGLPIVILVIVFPAM, WALMLISLILFIGSTNLLGLV, QLSMNLGMAIPLWAGAVITGF, IPMLVVIETISLFIQPMALAI, ITAGHLLMHLIGGAVLALTSI, and ILEFAVALIQAYVFTLLVSLYLH.

The protein belongs to the ATPase A chain family. In terms of assembly, component of the ATP synthase complex composed at least of ATP5F1A/subunit alpha, ATP5F1B/subunit beta, ATP5MC1/subunit c (homooctomer), MT-ATP6/subunit a, MT-ATP8/subunit 8, ATP5ME/subunit e, ATP5MF/subunit f, ATP5MG/subunit g, ATP5MK/subunit k, ATP5MJ/subunit j, ATP5F1C/subunit gamma, ATP5F1D/subunit delta, ATP5F1E/subunit epsilon, ATP5PF/subunit F6, ATP5PB/subunit b, ATP5PD/subunit d, ATP5PO/subunit OSCP. ATP synthase complex consists of a soluble F(1) head domain (subunits alpha(3) and beta(3)) - the catalytic core - and a membrane F(0) domain - the membrane proton channel (subunits c, a, 8, e, f, g, k and j). These two domains are linked by a central stalk (subunits gamma, delta, and epsilon) rotating inside the F1 region and a stationary peripheral stalk (subunits F6, b, d, and OSCP). Interacts with DNAJC30; interaction is direct.

Its subcellular location is the mitochondrion inner membrane. The enzyme catalyses H(+)(in) = H(+)(out). Subunit a, of the mitochondrial membrane ATP synthase complex (F(1)F(0) ATP synthase or Complex V) that produces ATP from ADP in the presence of a proton gradient across the membrane which is generated by electron transport complexes of the respiratory chain. ATP synthase complex consist of a soluble F(1) head domain - the catalytic core - and a membrane F(1) domain - the membrane proton channel. These two domains are linked by a central stalk rotating inside the F(1) region and a stationary peripheral stalk. During catalysis, ATP synthesis in the catalytic domain of F(1) is coupled via a rotary mechanism of the central stalk subunits to proton translocation. With the subunit c (ATP5MC1), forms the proton-conducting channel in the F(0) domain, that contains two crucial half-channels (inlet and outlet) that facilitate proton movement from the mitochondrial intermembrane space (IMS) into the matrix. Protons are taken up via the inlet half-channel and released through the outlet half-channel, following a Grotthuss mechanism. The polypeptide is ATP synthase F(0) complex subunit a (Dugong dugon (Dugong)).